Here is a 444-residue protein sequence, read N- to C-terminus: Glutamyl-tRNA reductase (444 aa).

Residues 49–52, Ser117, 122–124, and Gln128 each bind substrate; these read TCNR and EPQ. Catalysis depends on Cys50, which acts as the Nucleophile. Residue 202 to 207 participates in NADP(+) binding; that stretch reads GAGETI.

The protein belongs to the glutamyl-tRNA reductase family. Homodimer.

It carries out the reaction (S)-4-amino-5-oxopentanoate + tRNA(Glu) + NADP(+) = L-glutamyl-tRNA(Glu) + NADPH + H(+). It participates in porphyrin-containing compound metabolism; protoporphyrin-IX biosynthesis; 5-aminolevulinate from L-glutamyl-tRNA(Glu): step 1/2. In terms of biological role, catalyzes the NADPH-dependent reduction of glutamyl-tRNA(Glu) to glutamate 1-semialdehyde (GSA). This is Glutamyl-tRNA reductase from Mannheimia succiniciproducens (strain KCTC 0769BP / MBEL55E).